The following is a 607-amino-acid chain: MSSAPETSDADHVSTAQPALGIPRPPSVGGISSRMTDVASEDGEQSQANTGISSRPPQSQRSLSRRGPPPARSSITAHSQMTSRPGSSASRLSRSHIPSLTAQGFFRPMSSQRLQAHRGRPVTKETATPSEDWNDQLDQNRQSIISNGTFPQSSAPQEEAPPSRGTEFTDPIIPDRNTSNASPFGNTTSRSVGESAKLLHDRDRVYKITPQHLDLGANHNIEKSDPSQRSPLSFLSLQNGNTAPEPRDNRAHERLSSADSSPGSIQKQHHAPTSANLGKNYEYFTGNTLFFGGGRFQNSRDKPINIATGIFVVLPSALFFAYSAPWLWHHISPAVPILFAYLFYICFSSFIHASVVDPGIIPRNLHPMPPPEPSGDPLLIGPPTNDWVMVKLATSDVAAMDVPVKYCKTCNIWRPPRCYHCRVCDNCVETLDHHCVWLNNCVGRRNYRYFFAFVSSATLLALFLLGASLAHVLVYRAREGVSFGSAIDKWRVPWAMVIYGALAAPYPASLWAYHLFLIGRGETTREYLNSHKFAKADRHRPFTQGNIFRNWISVLARPRPPTYLQFKRPYQEGDQRLSAMKRKDRPRDVEAQADIEMQHVPPTPRQG.

Disordered stretches follow at residues 1–198 (MSSA…SAKL) and 217–272 (ANHN…HHAP). Over 1 to 305 (MSSAPETSDA…FQNSRDKPIN (305 aa)) the chain is Cytoplasmic. Residues 53-66 (SSRPPQSQRSLSRR) are compositionally biased toward low complexity. 4 stretches are compositionally biased toward polar residues: residues 73–102 (SSIT…SLTA), 125–156 (ETAT…SSAP), 176–192 (RNTS…SRSV), and 227–242 (SQRS…NGNT). Residues 245–256 (EPRDNRAHERLS) are compositionally biased toward basic and acidic residues. The span at 257-272 (SADSSPGSIQKQHHAP) shows a compositional bias: polar residues. The helical transmembrane segment at 306–326 (IATGIFVVLPSALFFAYSAPW) threads the bilayer. Residues 327 to 330 (LWHH) lie on the Lumenal side of the membrane. Residues 331–351 (ISPAVPILFAYLFYICFSSFI) traverse the membrane as a helical segment. Residues 352 to 449 (HASVVDPGII…NCVGRRNYRY (98 aa)) lie on the Cytoplasmic side of the membrane. Positions 405-455 (KYCKTCNIWRPPRCYHCRVCDNCVETLDHHCVWLNNCVGRRNYRYFFAFVS) constitute a DHHC domain. Residue Cys435 is the S-palmitoyl cysteine intermediate of the active site. A helical transmembrane segment spans residues 450-470 (FFAFVSSATLLALFLLGASLA). The Lumenal segment spans residues 471 to 497 (HVLVYRAREGVSFGSAIDKWRVPWAMV). A helical transmembrane segment spans residues 498–518 (IYGALAAPYPASLWAYHLFLI). At 519-607 (GRGETTREYL…QHVPPTPRQG (89 aa)) the chain is on the cytoplasmic side. The interval 570–607 (YQEGDQRLSAMKRKDRPRDVEAQADIEMQHVPPTPRQG) is disordered.

This sequence belongs to the DHHC palmitoyltransferase family. ERF2/ZDHHC9 subfamily. Post-translationally, autopalmitoylated.

Its subcellular location is the endoplasmic reticulum membrane. It carries out the reaction L-cysteinyl-[protein] + hexadecanoyl-CoA = S-hexadecanoyl-L-cysteinyl-[protein] + CoA. In terms of biological role, palmitoyltransferase specific for Ras proteins. The polypeptide is Palmitoyltransferase erf2 (erf2) (Aspergillus fumigatus (strain ATCC MYA-4609 / CBS 101355 / FGSC A1100 / Af293) (Neosartorya fumigata)).